Consider the following 108-residue polypeptide: Glutaredoxin-1 (108 aa).

A Glutaredoxin domain is found at 3 to 106; the sequence is EEFVQQRLAN…DILSSIGVLR (104 aa). The cysteines at positions 23 and 26 are disulfide-linked.

This sequence belongs to the glutaredoxin family.

It localises to the virion. Functionally, has thioltransferase and dehydroascorbate reductase activities. This Cowpox virus (strain GRI-90 / Grishak) (CPV) protein is Glutaredoxin-1 (OPG075).